A 175-amino-acid chain; its full sequence is B9 domain-containing protein 2 (175 aa).

Residues 2 to 118 form the C2 B9-type domain; that stretch reads AEVHVIGQII…DCPTWRPLGS (117 aa).

This sequence belongs to the B9D family. As to quaternary structure, part of the tectonic-like complex (also named B9 complex). Interacts with TUBG1. In terms of tissue distribution, highest expression in thymus and skeletal muscle. Also expressed in spleen, kidney, lung, heart, microglia and liver. Detected in brain (at protein level).

It is found in the cytoplasm. The protein localises to the cytoskeleton. The protein resides in the cilium basal body. It localises to the cilium axoneme. Its subcellular location is the nucleus. In terms of biological role, component of the tectonic-like complex, a complex localized at the transition zone of primary cilia and acting as a barrier that prevents diffusion of transmembrane proteins between the cilia and plasma membranes. The polypeptide is B9 domain-containing protein 2 (B9d2) (Mus musculus (Mouse)).